The sequence spans 231 residues: tRNA (guanine-N(7)-)-methyltransferase (231 aa).

S-adenosyl-L-methionine is bound by residues E62, E87, D114, and D137. Residue D137 is part of the active site. Residues K141, D173, and 210–213 (TKFE) contribute to the substrate site.

This sequence belongs to the class I-like SAM-binding methyltransferase superfamily. TrmB family.

It carries out the reaction guanosine(46) in tRNA + S-adenosyl-L-methionine = N(7)-methylguanosine(46) in tRNA + S-adenosyl-L-homocysteine. Its pathway is tRNA modification; N(7)-methylguanine-tRNA biosynthesis. In terms of biological role, catalyzes the formation of N(7)-methylguanine at position 46 (m7G46) in tRNA. The chain is tRNA (guanine-N(7)-)-methyltransferase from Methylococcus capsulatus (strain ATCC 33009 / NCIMB 11132 / Bath).